A 121-amino-acid chain; its full sequence is Large ribosomal subunit protein uL24 (121 aa).

The interval 1–23 is disordered; the sequence is MVRIESSQPRKQRKARYDAPSHM.

The protein belongs to the universal ribosomal protein uL24 family. In terms of assembly, part of the 50S ribosomal subunit.

In terms of biological role, one of two assembly initiator proteins, it binds directly to the 5'-end of the 23S rRNA, where it nucleates assembly of the 50S subunit. Located at the polypeptide exit tunnel on the outside of the subunit. The chain is Large ribosomal subunit protein uL24 from Methanoregula boonei (strain DSM 21154 / JCM 14090 / 6A8).